The following is a 406-amino-acid chain: GTPase Obg (406 aa).

One can recognise an Obg domain in the interval 1-159; sequence MRFVDEAVIT…REIRLELKVL (159 aa). A disordered region spans residues 120–143; the sequence is GGEGGLGNTHFKSSTNRAPRKCTT. The OBG-type G domain maps to 160–333; it reads ADVGLLGMPN…VVYYLMDQIE (174 aa). GTP is bound by residues 166–173, 191–195, 213–216, 283–286, and 314–316; these read GMPNAGKS, FTTMV, DIPG, NKLD, and SGL. Residues serine 173 and threonine 193 each coordinate Mg(2+). A disordered region spans residues 381 to 406; it reads ESMMDDDDDFDDDEDDGDVESIYVRD. A compositionally biased stretch (acidic residues) spans 383 to 399; that stretch reads MMDDDDDFDDDEDDGDV.

It belongs to the TRAFAC class OBG-HflX-like GTPase superfamily. OBG GTPase family. In terms of assembly, monomer. Mg(2+) is required as a cofactor.

It localises to the cytoplasm. An essential GTPase which binds GTP, GDP and possibly (p)ppGpp with moderate affinity, with high nucleotide exchange rates and a fairly low GTP hydrolysis rate. Plays a role in control of the cell cycle, stress response, ribosome biogenesis and in those bacteria that undergo differentiation, in morphogenesis control. This Acinetobacter baumannii (strain ACICU) protein is GTPase Obg.